A 214-amino-acid chain; its full sequence is Cytochrome c biogenesis ATP-binding export protein CcmA (214 aa).

In terms of domain architecture, ABC transporter spans 4–214; it reads LAVDQLTVSR…FDHGFDGAFL (211 aa). ATP is bound at residue 36 to 43; it reads GPNGIGKT.

Belongs to the ABC transporter superfamily. CcmA exporter (TC 3.A.1.107) family. As to quaternary structure, the complex is composed of two ATP-binding proteins (CcmA) and two transmembrane proteins (CcmB).

The protein resides in the cell inner membrane. The enzyme catalyses heme b(in) + ATP + H2O = heme b(out) + ADP + phosphate + H(+). Its function is as follows. Part of the ABC transporter complex CcmAB involved in the biogenesis of c-type cytochromes; once thought to export heme, this seems not to be the case, but its exact role is uncertain. Responsible for energy coupling to the transport system. The sequence is that of Cytochrome c biogenesis ATP-binding export protein CcmA from Rhodobacter capsulatus (strain ATCC BAA-309 / NBRC 16581 / SB1003).